A 311-amino-acid chain; its full sequence is Aldose reductase B (311 aa).

Residue 13–23 (DIHHIPMIGLG) coordinates NADP(+). Y54 serves as the catalytic Proton donor. H116 is a binding site for substrate. 219 to 273 (SPLGQGKCDLLSNETLKSIADKHNKTVANVIFKWLNQRGIVTIPKSSNPARIIEN) contacts NADP(+).

This sequence belongs to the aldo/keto reductase family.

It catalyses the reaction an alditol + NAD(+) = an aldose + NADH + H(+). The catalysed reaction is an alditol + NADP(+) = an aldose + NADPH + H(+). In terms of biological role, catalyzes the NADPH-dependent reduction of a wide variety of carbonyl-containing compounds to their corresponding alcohols with a broad range of catalytic efficiencies. The polypeptide is Aldose reductase B (alrB) (Dictyostelium discoideum (Social amoeba)).